The primary structure comprises 405 residues: 4-hydroxy-3-methylbut-2-en-1-yl diphosphate synthase (ferredoxin) (405 aa).

[4Fe-4S] cluster contacts are provided by Cys314, Cys317, Cys348, and Glu355.

It belongs to the IspG family. It depends on [4Fe-4S] cluster as a cofactor.

The catalysed reaction is (2E)-4-hydroxy-3-methylbut-2-enyl diphosphate + 2 oxidized [2Fe-2S]-[ferredoxin] + H2O = 2-C-methyl-D-erythritol 2,4-cyclic diphosphate + 2 reduced [2Fe-2S]-[ferredoxin] + H(+). Its pathway is isoprenoid biosynthesis; isopentenyl diphosphate biosynthesis via DXP pathway; isopentenyl diphosphate from 1-deoxy-D-xylulose 5-phosphate: step 5/6. Its function is as follows. Converts 2C-methyl-D-erythritol 2,4-cyclodiphosphate (ME-2,4cPP) into 1-hydroxy-2-methyl-2-(E)-butenyl 4-diphosphate. The sequence is that of 4-hydroxy-3-methylbut-2-en-1-yl diphosphate synthase (ferredoxin) from Prochlorococcus marinus subsp. pastoris (strain CCMP1986 / NIES-2087 / MED4).